The sequence spans 196 residues: Beta-crystallin A2 (196 aa).

The tract at residues Met-1–Gln-11 is N-terminal arm. Beta/gamma crystallin 'Greek key' domains follow at residues Tyr-12 to Ser-51 and Gly-52 to Lys-98. The interval Cys-99 to Asp-104 is connecting peptide. Beta/gamma crystallin 'Greek key' domains follow at residues Ser-105 to Ala-146 and Gly-147 to Gln-195.

Belongs to the beta/gamma-crystallin family. In terms of assembly, homo/heterodimer, or complexes of higher-order. The structure of beta-crystallin oligomers seems to be stabilized through interactions between the N-terminal arms.

Functionally, crystallins are the dominant structural components of the vertebrate eye lens. The polypeptide is Beta-crystallin A2 (CRYBA2) (Gallus gallus (Chicken)).